A 95-amino-acid chain; its full sequence is ESAT-6-like protein EsxC (95 aa).

The protein belongs to the WXG100 family. ESAT-6 subfamily.

The protein resides in the secreted. This Mycolicibacterium paratuberculosis (strain ATCC BAA-968 / K-10) (Mycobacterium paratuberculosis) protein is ESAT-6-like protein EsxC.